Consider the following 489-residue polypeptide: uncharacterized protein (489 aa).

The 2Fe-2S ferredoxin-type domain occupies 2–84 (IKITVKRFNG…GMIIEPLRGF (83 aa)). Positions 48, 53, 56, and 68 each coordinate [2Fe-2S] cluster. 4Fe-4S ferredoxin-type domains follow at residues 123-155 (KYVE…YPGP) and 177-205 (TAYF…IVHR). [4Fe-4S] cluster is bound by residues C134, C137, C140, C144, C186, C189, C192, and C196.

It belongs to the succinate dehydrogenase/fumarate reductase iron-sulfur protein family.

This is an uncharacterized protein from Methanocaldococcus jannaschii (strain ATCC 43067 / DSM 2661 / JAL-1 / JCM 10045 / NBRC 100440) (Methanococcus jannaschii).